A 116-amino-acid chain; its full sequence is Large ribosomal subunit protein bL20c (116 aa).

This sequence belongs to the bacterial ribosomal protein bL20 family.

Its subcellular location is the plastid. It localises to the chloroplast. In terms of biological role, binds directly to 23S ribosomal RNA and is necessary for the in vitro assembly process of the 50S ribosomal subunit. It is not involved in the protein synthesizing functions of that subunit. The sequence is that of Large ribosomal subunit protein bL20c from Cryptomeria japonica (Japanese cedar).